The following is an 814-amino-acid chain: MEFILGIFCVIFCLRAGAGFGVDPSLQIDIFEDFQLGEATPGVQQVQGFHNRSKAFLFQDTSRSIKASAETAERIFTKLRNKHEFTILVTLKQAMLNSGVILSIHHADHRYLELESSGHRNEVRLHYRSGSHRSQTEVFPYILADDKWHRFSIAISASHLVLHIDCNKIYERIVEKTFMDVPPGTALWVGQRNNVHGYFKGIMQDLQIVVMPQGFISQCPDLNRTCPTCNDFHGLVQKIMELQDILAKTSAKLSRAEQRMNRLDQCYCERSCTVKGNIYRELESWMDGCKKCTCTNGTAQCETLTCSVPNCLSGFAPAYVPGKCCKECQPVCMYQGQMYFEGEQEAVQSSSGACVLFQCKSNTMQRIESPECLPLNCPQSQHITLRSGCCKVCKGHDFCSEGHNCVEYSICKNLNDKAVCICRDGFRALREDSAYCEDIDECTEGRHYCRENTVCVNTPGSFMCVCQTGYLKIDDYSCTEHNECATNQHSCDENAVCYNTVGGHNCVCQPGYTGNGTVCKAFCTDGCRNGGTCIAPNICACPQGFTGPSCEADIDECTEGFVQCDSRANCINLPGWYHCECRDGYHDNGMFSLSGESCEDIDECATGRHSCSNDTVCFNLDGGFDCRCPHGKNCSGDCTHEGKIKHNGQIWVLENDRCSVCSCQVGLVMCRRMVCDCENPTVDLFCCPECDPRLSSQCLHQSGELTYKSGDTWVQNCQQCRCLQGEVDCWPLPCPEIDCEFSVVPESECCPRCISDPCQADIIRNDITKTCVDETNVVRFTGSSWIKHGTECTLCQCKNGHMCCSVDPQCLQEL.

An N-terminal signal peptide occupies residues 1 to 19 (MEFILGIFCVIFCLRAGAG). N-linked (GlcNAc...) asparagine glycosylation is found at Asn51, Asn223, and Asn296. Residues 53–226 (SKAFLFQDTS…SQCPDLNRTC (174 aa)) form the Laminin G-like domain. Positions 270–329 (RSCTVKGNIYRELESWMDGCKKCTCTNGTAQCETLTCSVPNCLSGFAPAYVPGKCCKECQ) constitute a VWFC 1 domain. The EGF-like 1 domain occupies 395–437 (GHDFCSEGHNCVEYSICKNLNDKAVCICRDGFRALREDSAYCE). Cystine bridges form between Cys399–Cys411, Cys405–Cys420, and Cys422–Cys436. Residues Asp438, Ile439, and Glu441 each contribute to the Ca(2+) site. The region spanning 438–479 (DIDECTEGRHYCRENTVCVNTPGSFMCVCQTGYLKIDDYSCT) is the EGF-like 2; calcium-binding domain. Cystine bridges form between Cys442–Cys455, Cys449–Cys464, Cys466–Cys478, Cys484–Cys497, Cys491–Cys506, Cys508–Cys519, Cys523–Cys533, Cys527–Cys539, and Cys541–Cys550. The Ca(2+) site is built by Asn457, Thr458, and Ser461. The region spanning 480–520 (EHNECATNQHSCDENAVCYNTVGGHNCVCQPGYTGNGTVCK) is the EGF-like 3; calcium-binding domain. Residue Asn515 is glycosylated (N-linked (GlcNAc...) asparagine). In terms of domain architecture, EGF-like 4 spans 521-551 (AFCTDGCRNGGTCIAPNICACPQGFTGPSCE). The Ca(2+) site is built by Asp553, Ile554, and Glu556. The EGF-like 5; calcium-binding domain occupies 553-599 (DIDECTEGFVQCDSRANCINLPGWYHCECRDGYHDNGMFSLSGESCE). Cystine bridges form between Cys557/Cys570, Cys564/Cys579, and Cys581/Cys598. 3 residues coordinate Ca(2+): Asn572, Leu573, and Trp576. Residues Asp600, Ile601, and Glu603 each contribute to the Ca(2+) site. Residues 600 to 635 (DIDECATGRHSCSNDTVCFNLDGGFDCRCPHGKNCS) enclose the EGF-like 6; calcium-binding domain. 3 cysteine pairs are disulfide-bonded: Cys604-Cys617, Cys611-Cys626, and Cys628-Cys634. Asn613 carries N-linked (GlcNAc...) asparagine glycosylation. The Ca(2+) site is built by Asn619, Leu620, and Gly623. N-linked (GlcNAc...) asparagine glycosylation occurs at Asn633. VWFC domains follow at residues 636–691 (GDCT…PECD) and 696–754 (SQCL…PRCI).

In terms of assembly, homotrimer.

The protein localises to the secreted. Functionally, may regulate neuronal differentiation, polarization and axon guidance. The chain is Protein kinase C-binding protein NELL2 (nell2) from Xenopus tropicalis (Western clawed frog).